A 127-amino-acid polypeptide reads, in one-letter code: Large ribosomal subunit protein bL17 (127 aa).

It belongs to the bacterial ribosomal protein bL17 family. Part of the 50S ribosomal subunit. Contacts protein L32.

The protein is Large ribosomal subunit protein bL17 of Limosilactobacillus reuteri (strain DSM 20016) (Lactobacillus reuteri).